We begin with the raw amino-acid sequence, 372 residues long: NAD(P)H-quinone oxidoreductase subunit 1 (372 aa).

8 helical membrane-spanning segments follow: residues 27-47, 97-117, 128-148, 176-196, 204-224, 266-286, 308-328, and 347-367; these read IIWLPLPMLLVLVAAVVGVLV, ILFTAGPILVLVPVILSWLIV, VGIGIFLWIALSSIQPIGLLM, LALSVLAIVLMTNSLSTIDIV, ILSWNIWRQPVGFIVFWICAL, ILSALLVSILYLGGWGFPVPV, SIGIVMTVLKAYLLVFIAILL, and FLLPISLANLLITAGLKLAFP.

Belongs to the complex I subunit 1 family. In terms of assembly, NDH-1 is composed of at least 11 different subunits.

The protein localises to the cellular thylakoid membrane. It catalyses the reaction a plastoquinone + NADH + (n+1) H(+)(in) = a plastoquinol + NAD(+) + n H(+)(out). The enzyme catalyses a plastoquinone + NADPH + (n+1) H(+)(in) = a plastoquinol + NADP(+) + n H(+)(out). In terms of biological role, NDH-1 shuttles electrons from an unknown electron donor, via FMN and iron-sulfur (Fe-S) centers, to quinones in the respiratory and/or the photosynthetic chain. The immediate electron acceptor for the enzyme in this species is believed to be plastoquinone. Couples the redox reaction to proton translocation, and thus conserves the redox energy in a proton gradient. This Prochlorococcus marinus (strain AS9601) protein is NAD(P)H-quinone oxidoreductase subunit 1.